A 540-amino-acid polypeptide reads, in one-letter code: Chaperonin GroEL (540 aa).

ATP-binding positions include 30-33, Lys-51, 87-91, Gly-415, 479-481, and Asp-495; these read TLAP, DGTTT, and NAA.

It belongs to the chaperonin (HSP60) family. Forms a cylinder of 14 subunits composed of two heptameric rings stacked back-to-back. Interacts with the co-chaperonin GroES.

It localises to the cytoplasm. It carries out the reaction ATP + H2O + a folded polypeptide = ADP + phosphate + an unfolded polypeptide.. Functionally, together with its co-chaperonin GroES, plays an essential role in assisting protein folding. The GroEL-GroES system forms a nano-cage that allows encapsulation of the non-native substrate proteins and provides a physical environment optimized to promote and accelerate protein folding. This Methylovorus sp. (strain SS1 / DSM 11726) protein is Chaperonin GroEL.